The following is an 87-amino-acid chain: MFVIELALKFSPLPLAVQRKKLEDAKALYNTVRECLENGHPKLLELNCEQLKDKKIAVLSSELLAVQIYEKTAVGGGIKRPGFSFDE.

Belongs to the UPF0367 family.

In Prochlorococcus marinus (strain MIT 9211), this protein is UPF0367 protein P9211_01391.